A 192-amino-acid polypeptide reads, in one-letter code: Leucine-rich repeat-containing protein 51 (192 aa).

3 LRR repeats span residues serine 49–valine 71, asparagine 80–phenylalanine 101, and asparagine 103–alanine 124. Residues asparagine 137 to tryptophan 175 enclose the LRRCT domain.

The protein resides in the cytoplasm. This is Leucine-rich repeat-containing protein 51 from Rattus norvegicus (Rat).